Consider the following 336-residue polypeptide: tRNA N6-adenosine threonylcarbamoyltransferase (336 aa).

The Fe cation site is built by His114 and His118. Substrate-binding positions include 136–140 (LVSGG), Asp169, Gly182, Asp186, and Asn275. Residue Asp301 participates in Fe cation binding.

This sequence belongs to the KAE1 / TsaD family. The cofactor is Fe(2+).

Its subcellular location is the cytoplasm. The catalysed reaction is L-threonylcarbamoyladenylate + adenosine(37) in tRNA = N(6)-L-threonylcarbamoyladenosine(37) in tRNA + AMP + H(+). In terms of biological role, required for the formation of a threonylcarbamoyl group on adenosine at position 37 (t(6)A37) in tRNAs that read codons beginning with adenine. Is involved in the transfer of the threonylcarbamoyl moiety of threonylcarbamoyl-AMP (TC-AMP) to the N6 group of A37, together with TsaE and TsaB. TsaD likely plays a direct catalytic role in this reaction. This is tRNA N6-adenosine threonylcarbamoyltransferase from Streptococcus mutans serotype c (strain ATCC 700610 / UA159).